A 273-amino-acid chain; its full sequence is Putative ankyrin repeat protein RBE_0317 (273 aa).

5 ANK repeats span residues 31-60, 93-123, 127-157, 161-191, and 195-225; these read LGKE…DFYS, NGNT…EVNT, GGNS…NVNE, YGDT…DVNE, and QGET…DTKQ.

This is Putative ankyrin repeat protein RBE_0317 from Rickettsia bellii (strain RML369-C).